The following is a 147-amino-acid chain: Small ribosomal subunit protein uS12 (147 aa).

Belongs to the universal ribosomal protein uS12 family. As to quaternary structure, part of the 30S ribosomal subunit.

With S4 and S5 plays an important role in translational accuracy. Located at the interface of the 30S and 50S subunits. This chain is Small ribosomal subunit protein uS12, found in Staphylothermus marinus (strain ATCC 43588 / DSM 3639 / JCM 9404 / F1).